The primary structure comprises 93 residues: Alpha-defensin 9 (93 aa).

Residues 1–19 (MKTLVLLSALVLLAFQVQA) form the signal peptide. Residues 20-58 (DPIQNTDEETKTEEQPGEEDQAVSVSFGDPEGSSLQEES) constitute a propeptide that is removed on maturation. The segment at 23–56 (QNTDEETKTEEQPGEEDQAVSVSFGDPEGSSLQE) is disordered. 3 disulfide bridges follow: C64–C92, C66–C81, and C71–C91.

Belongs to the alpha-defensin family. As to expression, paneth cells of the small bowel.

Its subcellular location is the secreted. Probably contributes to the antimicrobial barrier function of the small bowel mucosa. The protein is Alpha-defensin 9 (Defa9) of Mus musculus (Mouse).